A 247-amino-acid polypeptide reads, in one-letter code: Uridylate kinase (247 aa).

Position 15-18 (15-18 (KLSG)) interacts with ATP. The tract at residues 23–28 (GDEGFG) is involved in allosteric activation by GTP. Residue G57 participates in UMP binding. Residues G58 and R62 each coordinate ATP. UMP-binding positions include D77 and 138–145 (TGNPFFTT). T165, Y171, and D174 together coordinate ATP.

Belongs to the UMP kinase family. In terms of assembly, homohexamer.

The protein localises to the cytoplasm. The enzyme catalyses UMP + ATP = UDP + ADP. The protein operates within pyrimidine metabolism; CTP biosynthesis via de novo pathway; UDP from UMP (UMPK route): step 1/1. Its activity is regulated as follows. Allosterically activated by GTP. Inhibited by UTP. Its function is as follows. Catalyzes the reversible phosphorylation of UMP to UDP. The chain is Uridylate kinase from Colwellia psychrerythraea (strain 34H / ATCC BAA-681) (Vibrio psychroerythus).